The primary structure comprises 279 residues: Urease accessory protein UreD (279 aa).

Belongs to the UreD family. UreD, UreF and UreG form a complex that acts as a GTP-hydrolysis-dependent molecular chaperone, activating the urease apoprotein by helping to assemble the nickel containing metallocenter of UreC. The UreE protein probably delivers the nickel.

The protein resides in the cytoplasm. Required for maturation of urease via the functional incorporation of the urease nickel metallocenter. The protein is Urease accessory protein UreD of Streptococcus thermophilus (strain ATCC BAA-250 / LMG 18311).